The chain runs to 310 residues: Probable endonuclease 4 (310 aa).

The segment at Met1–Val31 is disordered. Residues His94, His134, Glu173, Asp207, His210, His244, Asp257, His259, and Glu289 each contribute to the Zn(2+) site.

Belongs to the AP endonuclease 2 family. It depends on Zn(2+) as a cofactor.

It carries out the reaction Endonucleolytic cleavage to 5'-phosphooligonucleotide end-products.. Its function is as follows. Endonuclease IV plays a role in DNA repair. It cleaves phosphodiester bonds at apurinic or apyrimidinic (AP) sites, generating a 3'-hydroxyl group and a 5'-terminal sugar phosphate. This Streptomyces avermitilis (strain ATCC 31267 / DSM 46492 / JCM 5070 / NBRC 14893 / NCIMB 12804 / NRRL 8165 / MA-4680) protein is Probable endonuclease 4.